The chain runs to 210 residues: Large ribosomal subunit protein uL3 (210 aa).

Residues histidine 125–aspartate 151 form a disordered region.

This sequence belongs to the universal ribosomal protein uL3 family. In terms of assembly, part of the 50S ribosomal subunit. Forms a cluster with proteins L14 and L19.

Functionally, one of the primary rRNA binding proteins, it binds directly near the 3'-end of the 23S rRNA, where it nucleates assembly of the 50S subunit. The chain is Large ribosomal subunit protein uL3 from Roseiflexus sp. (strain RS-1).